A 507-amino-acid chain; its full sequence is UDP-N-acetylhexosamine pyrophosphorylase-like protein 1 (507 aa).

Residues 56–91 (ACARPHGPPPDLAARLRPLPPERVGRASRSDPETRR) form a disordered region. Residues 78 to 91 (RVGRASRSDPETRR) show a composition bias toward basic and acidic residues. A Substrate binding motif is present at residues 111–114 (LAGG). Residues 111-114 (LAGG), lysine 125, glutamine 199, and glycine 225 contribute to the UTP site. A substrate-binding site is contributed by asparagine 226. Position 256 (aspartate 256) interacts with UTP. A Substrate binding motif is present at residues 306 to 307 (EY). Position 380 (lysine 380) interacts with UTP. Residue lysine 410 participates in substrate binding.

The protein belongs to the UDPGP type 1 family.

This Homo sapiens (Human) protein is UDP-N-acetylhexosamine pyrophosphorylase-like protein 1 (UAP1L1).